Consider the following 353-residue polypeptide: Protein MGF 360-11L (353 aa).

Belongs to the asfivirus MGF 360 family. As to quaternary structure, interacts with host TBK1 ad IRF7.

Plays a role in virus cell tropism, and may be required for efficient virus replication in macrophages. In addition, inhibits the phosphorylation of host TBK1 and IRF7 and thereby negatively regulates the host cGAS signaling pathway and antagonizes IFN-mediated antiviral activity. The chain is Protein MGF 360-11L from Ornithodoros (relapsing fever ticks).